The following is a 198-amino-acid chain: Small ribosomal subunit protein uS4 (198 aa).

Positions 91-151 constitute an S4 RNA-binding domain; the sequence is SRLDNIVYRL…EKSKNLKIVE (61 aa).

Belongs to the universal ribosomal protein uS4 family. In terms of assembly, part of the 30S ribosomal subunit. Contacts protein S5. The interaction surface between S4 and S5 is involved in control of translational fidelity.

Functionally, one of the primary rRNA binding proteins, it binds directly to 16S rRNA where it nucleates assembly of the body of the 30S subunit. With S5 and S12 plays an important role in translational accuracy. This Phytoplasma australiense protein is Small ribosomal subunit protein uS4.